The primary structure comprises 219 residues: Isovaleryl-homoserine lactone synthase (219 aa).

It belongs to the autoinducer synthase family.

The catalysed reaction is 3-methylbutanoyl-CoA + S-adenosyl-L-methionine = N-isovaleryl-L-homoserine lactone + S-methyl-5'-thioadenosine + CoA + H(+). Functionally, catalyzes the synthesis of IV-HSL (isovaleryl-homoserine lactone), a quorum-sensing (QS) autoinducer molecule which binds to BjaR1 transcriptional regulator to activate expression of QS-dependent genes. Is active with isovaleryl-CoA but cannot use isovaleryl-ACP as acyl donor. This Bradyrhizobium diazoefficiens (strain JCM 10833 / BCRC 13528 / IAM 13628 / NBRC 14792 / USDA 110) protein is Isovaleryl-homoserine lactone synthase (bjaI).